The following is a 197-amino-acid chain: Casparian strip membrane protein 5 (197 aa).

Topologically, residues 1-34 (MSTTIDMPGSSKAAKAGKPVLVTTPSRPGGWKKG) are cytoplasmic. Residues 35–55 (VAIMDFILRLGAIAAALGAAA) traverse the membrane as a helical segment. Topologically, residues 56 to 84 (TMGLSDQTLPFFTQFFQFEASYDSFTTFQ) are extracellular. Residues 85 to 105 (FFVITMALVAGYLVLSLPLSI) traverse the membrane as a helical segment. The Cytoplasmic segment spans residues 106-117 (VAVVRPHAAGPR). A helical transmembrane segment spans residues 118–138 (LFLIILDTVFLTLATASGASA). Topologically, residues 139–171 (ASIVYLAHNGNQDTNWIAICNQFGDFCAQTSGA) are extracellular. Residues 172-192 (VVSSLVAVLVFVLLIVMSALV) traverse the membrane as a helical segment. Residues 193 to 197 (LGKKH) lie on the Cytoplasmic side of the membrane.

The protein belongs to the Casparian strip membrane proteins (CASP) family. As to quaternary structure, homodimer and heterodimers.

The protein resides in the cell membrane. Regulates membrane-cell wall junctions and localized cell wall deposition. Required for establishment of the Casparian strip membrane domain (CSD) and the subsequent formation of Casparian strips, a cell wall modification of the root endodermis that determines an apoplastic barrier between the intraorganismal apoplasm and the extraorganismal apoplasm and prevents lateral diffusion. This is Casparian strip membrane protein 5 from Lotus japonicus (Lotus corniculatus var. japonicus).